The following is a 218-amino-acid chain: Epoxyqueuosine reductase QueH (218 aa).

[4Fe-4S] cluster contacts are provided by C22, C23, C101, and C104. A disulfide bridge links C184 with C186.

Belongs to the QueH family.

It carries out the reaction epoxyqueuosine(34) in tRNA + AH2 = queuosine(34) in tRNA + A + H2O. It participates in tRNA modification; tRNA-queuosine biosynthesis. Functionally, catalyzes the conversion of epoxyqueuosine (oQ) to queuosine (Q), which is a hypermodified base found in the wobble positions of tRNA(Asp), tRNA(Asn), tRNA(His) and tRNA(Tyr). The protein is Epoxyqueuosine reductase QueH of Acinetobacter baylyi (strain ATCC 33305 / BD413 / ADP1).